We begin with the raw amino-acid sequence, 23 residues long: Aldehyde dehydrogenase (23 aa).

This sequence belongs to the aldehyde dehydrogenase family.

It catalyses the reaction an aldehyde + NAD(+) + H2O = a carboxylate + NADH + 2 H(+). The chain is Aldehyde dehydrogenase from Moraxella sp. (strain TAE123).